The following is a 354-amino-acid chain: Uroporphyrinogen decarboxylase (354 aa).

Substrate is bound by residues 30–34 (RQAGR), Asp79, Tyr154, Ser209, and His333.

It belongs to the uroporphyrinogen decarboxylase family. As to quaternary structure, homodimer.

The protein localises to the cytoplasm. It carries out the reaction uroporphyrinogen III + 4 H(+) = coproporphyrinogen III + 4 CO2. The protein operates within porphyrin-containing compound metabolism; protoporphyrin-IX biosynthesis; coproporphyrinogen-III from 5-aminolevulinate: step 4/4. Its function is as follows. Catalyzes the decarboxylation of four acetate groups of uroporphyrinogen-III to yield coproporphyrinogen-III. The protein is Uroporphyrinogen decarboxylase of Mycolicibacterium gilvum (strain PYR-GCK) (Mycobacterium gilvum (strain PYR-GCK)).